Consider the following 586-residue polypeptide: Actin-related protein 9 (586 aa).

The interval 141-169 is disordered; the sequence is STPIVDKDADVDPLQRSTPDDTEPNSEEN.

The protein belongs to the actin family. ARP8 subfamily.

The protein is Actin-related protein 9 (ARP9) of Oryza sativa subsp. indica (Rice).